We begin with the raw amino-acid sequence, 101 residues long: MIGLPHYLVVAAILFTIGVFGIFVNRKNVIVILMSIELILLAVNINLVAFSAYLHDVAGQIFAMFVLTVAAAEAAVGLAILVTFFRNRGDIAVDDASMMKG.

3 helical membrane-spanning segments follow: residues 4–24 (LPHY…GIFV), 30–50 (IVIL…LVAF), and 61–81 (IFAM…LAIL).

This sequence belongs to the complex I subunit 4L family. As to quaternary structure, NDH-1 is composed of 14 different subunits. Subunits NuoA, H, J, K, L, M, N constitute the membrane sector of the complex.

It is found in the cell inner membrane. It catalyses the reaction a quinone + NADH + 5 H(+)(in) = a quinol + NAD(+) + 4 H(+)(out). Functionally, NDH-1 shuttles electrons from NADH, via FMN and iron-sulfur (Fe-S) centers, to quinones in the respiratory chain. The immediate electron acceptor for the enzyme in this species is believed to be ubiquinone. Couples the redox reaction to proton translocation (for every two electrons transferred, four hydrogen ions are translocated across the cytoplasmic membrane), and thus conserves the redox energy in a proton gradient. This chain is NADH-quinone oxidoreductase subunit K, found in Caulobacter vibrioides (strain ATCC 19089 / CIP 103742 / CB 15) (Caulobacter crescentus).